The chain runs to 1082 residues: DNA-directed RNA polymerase subunit beta (1082 aa).

It belongs to the RNA polymerase beta chain family. As to quaternary structure, in plastids the minimal PEP RNA polymerase catalytic core is composed of four subunits: alpha, beta, beta', and beta''. When a (nuclear-encoded) sigma factor is associated with the core the holoenzyme is formed, which can initiate transcription.

The protein localises to the plastid. It localises to the chloroplast. The catalysed reaction is RNA(n) + a ribonucleoside 5'-triphosphate = RNA(n+1) + diphosphate. In terms of biological role, DNA-dependent RNA polymerase catalyzes the transcription of DNA into RNA using the four ribonucleoside triphosphates as substrates. The protein is DNA-directed RNA polymerase subunit beta of Euglena gracilis.